The sequence spans 493 residues: Voltage-gated potassium channel regulatory subunit KCNF1 (493 aa).

Residues methionine 1–valine 183 are Cytoplasmic-facing. Residues valine 184–isoleucine 204 form a helical membrane-spanning segment. Residues asparagine 224–serine 244 traverse the membrane as a helical segment. Residues proline 245–histidine 249 are Cytoplasmic-facing. Residues phenylalanine 250–leucine 270 form a helical membrane-spanning segment. Residues glutamine 290 to leucine 310 traverse the membrane as a helical; Voltage-sensor segment. The Cytoplasmic portion of the chain corresponds to glutamine 311–leucine 324. The chain crosses the membrane as a helical span at residues glycine 325 to methionine 345. Residues proline 358–proline 378 constitute an intramembrane region (pore-forming). The Selectivity filter signature appears at threonine 370–aspartate 375. The helical transmembrane segment at asparagine 386 to isoleucine 406 threads the bilayer. The Cytoplasmic portion of the chain corresponds to asparagine 407–lysine 493. The segment at serine 434 to lysine 468 is disordered.

The protein belongs to the potassium channel family. F (TC 1.A.1.2) subfamily. Kv5.1/KCNF1 sub-subfamily. As to quaternary structure, heterotetramer with KCNB1 or KCNB2.

The protein resides in the cell membrane. Regulatory alpha-subunit of the voltage-gated potassium (Kv) channel which, when coassembled with KCNB1 or KCNB2, can modulate their expression and their gating kinetics by acting on deactivation upon repolarization and inactivation during maintained depolarization. Accelerates inactivation but has relatively little effect on deactivation. Coexpression with KCNB1 or KCNB2 markedly slows inactivation. Each modulatory subunit has its own specific properties of regulation, and can lead to extensive inhibitions, to large changes in kinetics, and/or to large shifts in the voltage dependencies of the inactivation process. The gating kinetics depends on the nature and stoichiometry of the associated regulatory sunbunit. Fails to produce a potassium current when expressed alone. The chain is Voltage-gated potassium channel regulatory subunit KCNF1 from Mus musculus (Mouse).